The sequence spans 317 residues: Apolipoprotein E (317 aa).

Positions methionine 1–alanine 18 are cleaved as a signal peptide. 8 repeat units span residues alanine 80 to threonine 101, proline 102 to glycine 123, alanine 124 to glycine 145, glutamine 146 to leucine 167, arginine 168 to glutamate 189, arginine 190 to alanine 211, threonine 212 to arginine 233, and alanine 234 to alanine 255. Positions alanine 80–alanine 255 are 8 X 22 AA approximate tandem repeats. Methionine 143 carries the methionine sulfoxide modification. Serine 147 is modified (phosphoserine). Residues histidine 158–arginine 168 are LDL and other lipoprotein receptors binding. Leucine 162–arginine 165 is a heparin binding site. The tract at residues alanine 210–methionine 290 is lipid-binding and lipoprotein association. Heparin is bound at residue glycine 229–methionine 236. Residues glutamine 266–histidine 317 are homooligomerization. Residues arginine 278–methionine 290 are specificity for association with VLDL.

The protein belongs to the apolipoprotein A1/A4/E family. In terms of assembly, homotetramer. May interact with ABCA1; functionally associated with ABCA1 in the biogenesis of HDLs. May interact with APP/A4 amyloid-beta peptide; the interaction is extremely stable in vitro but its physiological significance is unclear. May interact with MAPT. May interact with MAP2. In the cerebrospinal fluid, interacts with secreted SORL1. Interacts with PMEL; this allows the loading of PMEL luminal fragment on ILVs to induce fibril nucleation. Post-translationally, APOE exists as multiple glycosylated and sialylated glycoforms within cells and in plasma. The extent of glycosylation and sialylation are tissue and context specific. In terms of processing, glycated in plasma VLDL. Phosphorylated by FAM20C in the extracellular medium.

It localises to the secreted. Its subcellular location is the extracellular space. The protein resides in the extracellular matrix. It is found in the extracellular vesicle. The protein localises to the endosome. It localises to the multivesicular body. APOE is an apolipoprotein, a protein associating with lipid particles, that mainly functions in lipoprotein-mediated lipid transport between organs via the plasma and interstitial fluids. APOE is a core component of plasma lipoproteins and is involved in their production, conversion and clearance. Apolipoproteins are amphipathic molecules that interact both with lipids of the lipoprotein particle core and the aqueous environment of the plasma. As such, APOE associates with chylomicrons, chylomicron remnants, very low density lipoproteins (VLDL) and intermediate density lipoproteins (IDL) but shows a preferential binding to high-density lipoproteins (HDL). It also binds a wide range of cellular receptors including the LDL receptor/LDLR, the LDL receptor-related proteins LRP1, LRP2 and LRP8 and the very low-density lipoprotein receptor/VLDLR that mediate the cellular uptake of the APOE-containing lipoprotein particles. Finally, APOE also has a heparin-binding activity and binds heparan-sulfate proteoglycans on the surface of cells, a property that supports the capture and the receptor-mediated uptake of APOE-containing lipoproteins by cells. A main function of APOE is to mediate lipoprotein clearance through the uptake of chylomicrons, VLDLs, and HDLs by hepatocytes. APOE is also involved in the biosynthesis by the liver of VLDLs as well as their uptake by peripheral tissues ensuring the delivery of triglycerides and energy storage in muscle, heart and adipose tissues. By participating in the lipoprotein-mediated distribution of lipids among tissues, APOE plays a critical role in plasma and tissues lipid homeostasis. APOE is also involved in two steps of reverse cholesterol transport, the HDLs-mediated transport of cholesterol from peripheral tissues to the liver, and thereby plays an important role in cholesterol homeostasis. First, it is functionally associated with ABCA1 in the biogenesis of HDLs in tissues. Second, it is enriched in circulating HDLs and mediates their uptake by hepatocytes. APOE also plays an important role in lipid transport in the central nervous system, regulating neuron survival and sprouting. This is Apolipoprotein E (APOE) from Pongo pygmaeus (Bornean orangutan).